A 673-amino-acid chain; its full sequence is MNPSQLFQLHTEFEPCGDQPEAINQLVASILQNKRSQVLLGITGSGKTFTMANVIAKVQRPTLILAHNKTLAAQLYQEFKAFFPHNAVEYFVSYYDYYQPEAYVPRTDTYIEKDMSINDKIDKMRLSATRSLLERSDVIIVSSVSCIYGLGSPEYYRGMNLTLSQGQMRRRDDILLHLVEMQYKRNDFEFIRSTFRVRGDVLDIFPAYEEDLAIRVEMFGDEIEQISEIDPLTGKVKRRIASITIYPSSHHVTPEEIRLKAMETIRAELDERRQFYETEKKYLELERIQQRTMYDLEMLKEVGTCKGIENYSRHFSMRQPGAPPPCLLDYFPSDYLLVIDESHQTLPQVHAMFNGDRARKQTLVDFGFRLPSAFDNRPLRFEEVYGRIHQVVYVSATPGAWEVQEAGGEIVEQLIRPTGLLDPIIEIRPASGQVDDCLAEIRSHVSKGGRVLLTTLTKKLSEELTTYLNDLNVKAKYLHSDIDTIERVQIIRDLRLGVFDVLVGINLLREGLDIPEVSLVAILDADKEGFLRSETSLIQTCGRAARNAEGRVIMYADKITKSIKRTLEITESRRALQMRYNEQHGITPRTVKREISVLMESEEDQVTHPTKLEEEIFKAAEEAHHYLTLDEVRLKIKECEKEMKKAAKEFRFEEAADWRDQMRRYQQIELTLA.

A Helicase ATP-binding domain is found at 28 to 414; sequence ASILQNKRSQ…EAGGEIVEQL (387 aa). 41-48 lines the ATP pocket; it reads GITGSGKT. Positions 94–117 match the Beta-hairpin motif; the sequence is YYDYYQPEAYVPRTDTYIEKDMSI. The Helicase C-terminal domain occupies 433 to 595; sequence QVDDCLAEIR…ITPRTVKREI (163 aa). The UVR domain occupies 633–668; sequence RLKIKECEKEMKKAAKEFRFEEAADWRDQMRRYQQI.

It belongs to the UvrB family. Forms a heterotetramer with UvrA during the search for lesions. Interacts with UvrC in an incision complex.

It localises to the cytoplasm. Functionally, the UvrABC repair system catalyzes the recognition and processing of DNA lesions. A damage recognition complex composed of 2 UvrA and 2 UvrB subunits scans DNA for abnormalities. Upon binding of the UvrA(2)B(2) complex to a putative damaged site, the DNA wraps around one UvrB monomer. DNA wrap is dependent on ATP binding by UvrB and probably causes local melting of the DNA helix, facilitating insertion of UvrB beta-hairpin between the DNA strands. Then UvrB probes one DNA strand for the presence of a lesion. If a lesion is found the UvrA subunits dissociate and the UvrB-DNA preincision complex is formed. This complex is subsequently bound by UvrC and the second UvrB is released. If no lesion is found, the DNA wraps around the other UvrB subunit that will check the other stand for damage. The polypeptide is UvrABC system protein B (Protochlamydia amoebophila (strain UWE25)).